Here is a 254-residue protein sequence, read N- to C-terminus: DNA repair protein RecO (254 aa).

Belongs to the RecO family.

Involved in DNA repair and RecF pathway recombination. The sequence is that of DNA repair protein RecO from Verminephrobacter eiseniae (strain EF01-2).